The primary structure comprises 243 residues: Chromosome partition protein MukE (243 aa).

The interval 223-243 is disordered; it reads LMENDTKSADEIDEEFDGEQE. The segment covering 233–243 has biased composition (acidic residues); it reads EIDEEFDGEQE.

The protein belongs to the MukE family. In terms of assembly, interacts, and probably forms a ternary complex, with MukF and MukB. The complex formation is stimulated by calcium or magnesium.

The protein resides in the cytoplasm. It is found in the nucleoid. Functionally, involved in chromosome condensation, segregation and cell cycle progression. May participate in facilitating chromosome segregation by condensation DNA from both sides of a centrally located replisome during cell division. Probably acts via its interaction with MukB and MukF. This chain is Chromosome partition protein MukE, found in Haemophilus influenzae (strain ATCC 51907 / DSM 11121 / KW20 / Rd).